We begin with the raw amino-acid sequence, 164 residues long: Endoribonuclease YbeY (164 aa).

3 residues coordinate Zn(2+): H125, H129, and H135.

It belongs to the endoribonuclease YbeY family. Requires Zn(2+) as cofactor.

The protein localises to the cytoplasm. Single strand-specific metallo-endoribonuclease involved in late-stage 70S ribosome quality control and in maturation of the 3' terminus of the 16S rRNA. This chain is Endoribonuclease YbeY, found in Paramagnetospirillum magneticum (strain ATCC 700264 / AMB-1) (Magnetospirillum magneticum).